The following is a 43-amino-acid chain: Kappa-actitoxin-Avd4p (43 aa).

3 disulfides stabilise this stretch: Cys-4/Cys-39, Cys-6/Cys-32, and Cys-22/Cys-40.

The protein localises to the secreted. It is found in the nematocyst. Blocks Kv3 voltage-gated potassium channels. Reduces blood pressure. This is Kappa-actitoxin-Avd4p from Anemonia viridis (Snakelocks anemone).